The following is a 63-amino-acid chain: Large ribosomal subunit protein uL30 (63 aa).

This sequence belongs to the universal ribosomal protein uL30 family. Part of the 50S ribosomal subunit.

The sequence is that of Large ribosomal subunit protein uL30 from Rickettsia africae (strain ESF-5).